The following is a 498-amino-acid chain: Dynein regulatory complex subunit 5 (498 aa).

2 disordered regions span residues 27–52 and 200–223; these read ALGSSSTGPTSLKTSSTPTPGQLKTK and MPTPLQGEEQSDSGSEGEGSEPEK. The segment covering 28–47 has biased composition (low complexity); that stretch reads LGSSSTGPTSLKTSSTPTPG. LRR repeat units follow at residues 276-299, 306-327, 333-353, 361-382, 389-409, and 417-438; these read CHTLKIFKLTRSKVDDDKARILIR, ALEELDLSHNLIGDRGARAAAK, RLRVLNLANNQLQAPGAQSLA, NLVFLNLRLNCIEDEGGQAIAH, CLSVLHLGGNKLSEPTATLLS, and TLVSLNLSCNHIGQDGGKQLLE.

Belongs to the DRC5 family. As to quaternary structure, component of the nexin-dynein regulatory complex (N-DRC). Interacts with DRC1. Interacts with FBXL13/DRC6, DRC3 and DRC7. In terms of tissue distribution, testis-specific (at protein level).

It localises to the cell projection. Its subcellular location is the cilium. It is found in the flagellum. The protein localises to the cytoplasm. The protein resides in the cytoskeleton. It localises to the flagellum axoneme. In terms of biological role, component of the nexin-dynein regulatory complex (N-DRC) a key regulator of ciliary/flagellar motility which maintains the alignment and integrity of the distal axoneme and regulates microtubule sliding in motile axonemes. May play a role in the assembly of N-DRC. Required for sperm motility. The protein is Dynein regulatory complex subunit 5 (Tcte1) of Mus musculus (Mouse).